Reading from the N-terminus, the 99-residue chain is Small ribosomal subunit protein bS20 (99 aa).

Belongs to the bacterial ribosomal protein bS20 family.

Binds directly to 16S ribosomal RNA. The chain is Small ribosomal subunit protein bS20 from Cyanothece sp. (strain PCC 7425 / ATCC 29141).